The primary structure comprises 460 residues: DEAD-box helicase Dbp80 (460 aa).

Serine 26 carries the post-translational modification Phosphoserine. A Phosphothreonine modification is found at threonine 30. The short motif at 73–101 is the Q motif element; the sequence is KTFEALHLKASLLKGIYAMGFNTPSKIQE. Residues 106–276 form the Helicase ATP-binding domain; sequence TLLADPPQNM…RLIVADPTII (171 aa). An ATP-binding site is contributed by 119–126; the sequence is SQSGTGKT. The short motif at 223-226 is the DEAD box element; it reads DEAD. One can recognise a Helicase C-terminal domain in the interval 287-455; that stretch reads NIKQYYVKCK…VLNTDSADDI (169 aa).

Belongs to the DEAD box helicase family. DDX19/DBP5 subfamily.

Its subcellular location is the cytoplasm. The protein localises to the nucleus. It is found in the nucleoplasm. The catalysed reaction is ATP + H2O = ADP + phosphate + H(+). Its function is as follows. ATP-dependent RNA helicase involved in mRNA export from the nucleus. This Drosophila melanogaster (Fruit fly) protein is DEAD-box helicase Dbp80 (Dbp80).